Reading from the N-terminus, the 362-residue chain is Alpha-glucoside transport ATP-binding protein AglK (362 aa).

The region spanning 4 to 235 (LLLKDIRKSY…PANLFVARFI (232 aa)) is the ABC transporter domain. 36 to 43 (GPSGCGKS) contacts ATP.

Belongs to the ABC transporter superfamily.

It is found in the cell inner membrane. In terms of biological role, part of the binding-protein-dependent transport system for alpha-glucosides such as sucrose, maltose and trehalose. Probably responsible for energy coupling to the transport system. This is Alpha-glucoside transport ATP-binding protein AglK (aglK) from Rhizobium meliloti (strain 1021) (Ensifer meliloti).